Consider the following 393-residue polypeptide: Ig heavy chain C region (393 aa).

3 Ig-like domains span residues 63 to 157 (PTVI…RNIT), 168 to 260 (PVIK…ASIH), and 270 to 370 (PSVS…RTVN). N-linked (GlcNAc...) asparagine glycans are attached at residues asparagine 119, asparagine 155, asparagine 200, asparagine 230, asparagine 329, asparagine 366, asparagine 370, and asparagine 380.

The protein is Ig heavy chain C region of Heterodontus francisci (Horn shark).